We begin with the raw amino-acid sequence, 77 residues long: Cell division topological specificity factor (77 aa).

Belongs to the MinE family.

Functionally, prevents the cell division inhibition by proteins MinC and MinD at internal division sites while permitting inhibition at polar sites. This ensures cell division at the proper site by restricting the formation of a division septum at the midpoint of the long axis of the cell. The chain is Cell division topological specificity factor from Helicobacter pylori (strain Shi470).